Here is a 423-residue protein sequence, read N- to C-terminus: COP9 signalosome complex subunit 3 (423 aa).

Residue Ala2 is modified to N-acetylalanine. In terms of domain architecture, PCI spans 197–365; that stretch reads NFERALYFYE…GMVSFHDNPE (169 aa). The interval 402-423 is disordered; sequence QFVQKSMGSQEDDSGNKPSSYS. Phosphoserine occurs at positions 407, 410, and 423.

Belongs to the CSN3 family. Component of the CSN complex, composed of COPS1/GPS1, COPS2, COPS3, COPS4, COPS5, COPS6, COPS7 (COPS7A or COPS7B), COPS8 and COPS9. In the complex, it probably interacts directly with COPS1, COPS4, COPS8 and COPS9. Interacts with CK2 and PKD. Interacts with the translation initiation factor EIF3S6 and IKBKG. Interacts with ERCC6.

The protein resides in the cytoplasm. Its subcellular location is the nucleus. In terms of biological role, component of the COP9 signalosome complex (CSN), a complex involved in various cellular and developmental processes. The CSN complex is an essential regulator of the ubiquitin (Ubl) conjugation pathway by mediating the deneddylation of the cullin subunits of SCF-type E3 ligase complexes, leading to decrease the Ubl ligase activity of SCF-type complexes such as SCF, CSA or DDB2. The complex is also involved in phosphorylation of p53/TP53, c-jun/JUN, IkappaBalpha/NFKBIA, ITPK1 and IRF8/ICSBP, possibly via its association with CK2 and PKD kinases. CSN-dependent phosphorylation of TP53 and JUN promotes and protects degradation by the Ubl system, respectively. Essential to maintain the survival of epiblast cells and thus the development of the postimplantation embryo. In Rattus norvegicus (Rat), this protein is COP9 signalosome complex subunit 3 (Cops3).